The chain runs to 117 residues: MRVKRGQAAHKRHKKFLKMAKGYVGARSKLYETAREVAERSLVYAYRDRKQRKRQMRKLWILRINAAARENGLSYSVFMHGLTVAGVELDRKVLADMAVREKDSFQKLAELVKSKVA.

Belongs to the bacterial ribosomal protein bL20 family.

Its function is as follows. Binds directly to 23S ribosomal RNA and is necessary for the in vitro assembly process of the 50S ribosomal subunit. It is not involved in the protein synthesizing functions of that subunit. In Solidesulfovibrio magneticus (strain ATCC 700980 / DSM 13731 / RS-1) (Desulfovibrio magneticus), this protein is Large ribosomal subunit protein bL20.